The chain runs to 100 residues: Phosphoribosyl-ATP pyrophosphatase (100 aa).

Belongs to the PRA-PH family.

Its subcellular location is the cytoplasm. The enzyme catalyses 1-(5-phospho-beta-D-ribosyl)-ATP + H2O = 1-(5-phospho-beta-D-ribosyl)-5'-AMP + diphosphate + H(+). Its pathway is amino-acid biosynthesis; L-histidine biosynthesis; L-histidine from 5-phospho-alpha-D-ribose 1-diphosphate: step 2/9. The polypeptide is Phosphoribosyl-ATP pyrophosphatase (Haloquadratum walsbyi (strain DSM 16790 / HBSQ001)).